The primary structure comprises 202 residues: 3-isopropylmalate dehydratase small subunit 1 (202 aa).

It belongs to the LeuD family. LeuD type 1 subfamily. In terms of assembly, heterodimer of LeuC and LeuD.

It carries out the reaction (2R,3S)-3-isopropylmalate = (2S)-2-isopropylmalate. It participates in amino-acid biosynthesis; L-leucine biosynthesis; L-leucine from 3-methyl-2-oxobutanoate: step 2/4. In terms of biological role, catalyzes the isomerization between 2-isopropylmalate and 3-isopropylmalate, via the formation of 2-isopropylmaleate. This Mannheimia succiniciproducens (strain KCTC 0769BP / MBEL55E) protein is 3-isopropylmalate dehydratase small subunit 1.